The chain runs to 545 residues: ATP synthase F(1) complex subunit alpha, mitochondrial (545 aa).

ATP is bound by residues Q216, G218, K219, T220, and S221. T220 contacts Mg(2+). D304 serves as a coordination point for Mg(2+). Positions 465 and 467 each coordinate ATP.

It belongs to the ATPase alpha/beta chains family. As to quaternary structure, homotrimer. Component of the ATP synthase complex composed at least of ATP5F1A/subunit alpha, ATP5F1B/subunit beta, ATP5MC1/subunit c (homooctomer), MT-ATP6/subunit a, MT-ATP8/subunit 8, ATP5ME/subunit e, ATP5MF/subunit f, ATP5MG/subunit g, ATP5MK/subunit k, ATP5MJ/subunit j, ATP5F1C/subunit gamma, ATP5F1D/subunit delta, ATP5F1E/subunit epsilon, ATP5PF/subunit F6, ATP5PB/subunit b, ATP5PD/subunit d, ATP5PO/subunit OSCP. ATP synthase complex consists of a soluble F(1) head domain (subunits alpha(3) and beta(3)) - the catalytic core - and a membrane F(0) domain - the membrane proton channel (subunits c, a, 8, e, f, g, k and j). These two domains are linked by a central stalk (subunits gamma, delta, and epsilon) rotating inside the F1 region and a stationary peripheral stalk (subunits F6, b, d, and OSCP).

The protein localises to the mitochondrion inner membrane. Functionally, subunit alpha, of the mitochondrial membrane ATP synthase complex (F(1)F(0) ATP synthase or Complex V) that produces ATP from ADP in the presence of a proton gradient across the membrane which is generated by electron transport complexes of the respiratory chain. ATP synthase complex consist of a soluble F(1) head domain - the catalytic core - and a membrane F(1) domain - the membrane proton channel. These two domains are linked by a central stalk rotating inside the F(1) region and a stationary peripheral stalk. During catalysis, ATP synthesis in the catalytic domain of F(1) is coupled via a rotary mechanism of the central stalk subunits to proton translocation. In vivo, can only synthesize ATP although its ATP hydrolase activity can be activated artificially in vitro. With the catalytic subunit beta (ATP5F1B), forms the catalytic core in the F(1) domain. Subunit alpha does not bear the catalytic high-affinity ATP-binding sites. The chain is ATP synthase F(1) complex subunit alpha, mitochondrial from Xenopus laevis (African clawed frog).